The chain runs to 248 residues: uncharacterized protein (248 aa).

9 to 33 (IITGASSGIGKATALLLAEKGAKLV) provides a ligand contact to NADP(+). Position 141 (Ser-141) interacts with substrate. Tyr-154 acts as the Proton acceptor in catalysis.

This sequence belongs to the short-chain dehydrogenases/reductases (SDR) family.

This is an uncharacterized protein from Listeria monocytogenes serovar 1/2a (strain ATCC BAA-679 / EGD-e).